We begin with the raw amino-acid sequence, 314 residues long: Formimidoylglutamase (314 aa).

The Mn(2+) site is built by His127, Asp153, His155, Asp157, Asp245, and Asp247.

This sequence belongs to the arginase family. Mn(2+) is required as a cofactor.

The catalysed reaction is N-formimidoyl-L-glutamate + H2O = formamide + L-glutamate. It participates in amino-acid degradation; L-histidine degradation into L-glutamate; L-glutamate from N-formimidoyl-L-glutamate (hydrolase route): step 1/1. In terms of biological role, catalyzes the conversion of N-formimidoyl-L-glutamate to L-glutamate and formamide. In Aeromonas hydrophila subsp. hydrophila (strain ATCC 7966 / DSM 30187 / BCRC 13018 / CCUG 14551 / JCM 1027 / KCTC 2358 / NCIMB 9240 / NCTC 8049), this protein is Formimidoylglutamase.